Consider the following 246-residue polypeptide: FAD synthetase (246 aa).

This sequence belongs to the RibF family.

It carries out the reaction FMN + ATP + H(+) = FAD + diphosphate. It participates in cofactor biosynthesis; FAD biosynthesis; FAD from FMN: step 1/1. In terms of biological role, catalyzes the adenylation of flavin mononucleotide (FMN) to form flavin adenine dinucleotide (FAD) coenzyme. Can also catalyze, with lower efficiency, the adenylation of the toxic riboflavin analogs 8-demethyl-8-aminoriboflavin mononucleotide (AFMN) and roseoflavin mononucleotide (RoFMN) to 8-demethyl-8-aminoriboflavin adenine dinucleotide (AFAD) and roseoflavin adenine dinucleotide (RoFAD), respectively. The chain is FAD synthetase from Listeria monocytogenes serovar 1/2a (strain ATCC BAA-679 / EGD-e).